The sequence spans 428 residues: Something about silencing protein 10 (428 aa).

The segment at 1 to 93 is disordered; the sequence is MDSDGDDYVM…NTMDWGSKRS (93 aa). 2 stretches are compositionally biased toward acidic residues: residues 15-24 and 46-62; these read QEYDDEEREI and SDDDDDDDDDDEEEQQD. Residues S152, S323, S324, and S337 each carry the phosphoserine modification. Residues 317-386 are disordered; the sequence is GQQASVSSDD…LRNPRVKHRG (70 aa). Over residues 324-336 the composition is skewed to acidic residues; sequence SDDDDNDDDDDAE. The segment covering 344–353 has biased composition (acidic residues); the sequence is EEAGEEEEEE. A compositionally biased stretch (basic residues) spans 370–386; that stretch reads TPHRKKELRNPRVKHRG.

The protein belongs to the SAS10 family.

The protein resides in the nucleus. Its function is as follows. Essential for gene silencing: has a role in the structure of silenced chromatin. May be involved in gene regulation during development. Binds RNA. The chain is Something about silencing protein 10 from Drosophila melanogaster (Fruit fly).